Consider the following 123-residue polypeptide: Large ribosomal subunit protein bL12 (123 aa).

This sequence belongs to the bacterial ribosomal protein bL12 family. Homodimer. Part of the ribosomal stalk of the 50S ribosomal subunit. Forms a multimeric L10(L12)X complex, where L10 forms an elongated spine to which 2 to 4 L12 dimers bind in a sequential fashion. Binds GTP-bound translation factors.

Functionally, forms part of the ribosomal stalk which helps the ribosome interact with GTP-bound translation factors. Is thus essential for accurate translation. The polypeptide is Large ribosomal subunit protein bL12 (Maricaulis maris (strain MCS10) (Caulobacter maris)).